We begin with the raw amino-acid sequence, 479 residues long: Ribosomal RNA small subunit methyltransferase F (479 aa).

S-adenosyl-L-methionine is bound by residues 125–131, glutamate 149, aspartate 176, and aspartate 194; that span reads AAAPGSK. Residue cysteine 247 is the Nucleophile of the active site.

It belongs to the class I-like SAM-binding methyltransferase superfamily. RsmB/NOP family.

Its subcellular location is the cytoplasm. It carries out the reaction cytidine(1407) in 16S rRNA + S-adenosyl-L-methionine = 5-methylcytidine(1407) in 16S rRNA + S-adenosyl-L-homocysteine + H(+). Its function is as follows. Specifically methylates the cytosine at position 1407 (m5C1407) of 16S rRNA. The protein is Ribosomal RNA small subunit methyltransferase F of Escherichia coli O157:H7 (strain EC4115 / EHEC).